Here is a 273-residue protein sequence, read N- to C-terminus: Large ribosomal subunit protein uL2 (273 aa).

Disordered regions lie at residues 28-53 (KPFA…TTRH) and 221-273 (RGTA…RRSK). The segment covering 39–48 (KSGGRNNNGR) has biased composition (low complexity).

This sequence belongs to the universal ribosomal protein uL2 family. As to quaternary structure, part of the 50S ribosomal subunit. Forms a bridge to the 30S subunit in the 70S ribosome.

In terms of biological role, one of the primary rRNA binding proteins. Required for association of the 30S and 50S subunits to form the 70S ribosome, for tRNA binding and peptide bond formation. It has been suggested to have peptidyltransferase activity; this is somewhat controversial. Makes several contacts with the 16S rRNA in the 70S ribosome. This chain is Large ribosomal subunit protein uL2, found in Klebsiella pneumoniae (strain 342).